A 413-amino-acid polypeptide reads, in one-letter code: Putative syntaxin-5 (413 aa).

The Cytoplasmic segment spans residues 1-391 (MSDFHNIRSR…RYLQNISKNR (391 aa)). The disordered stretch occupies residues 257-290 (KNRRDKFSSGAAVPMGLPSSSSGANVRSKLLQDD). One can recognise a t-SNARE coiled-coil homology domain in the interval 321 to 383 (LEYAQARSNT…DMAHSELVRY (63 aa)). Residues 392–412 (WLMIQVFGVLMVFFVVFVLFL) traverse the membrane as a helical; Anchor for type IV membrane protein segment. Residue threonine 413 is a topological domain, extracellular.

The protein belongs to the syntaxin family.

It localises to the membrane. Functionally, potentially involved in docking of synaptic vesicles at presynaptic active zones. The protein is Putative syntaxin-5 (syx-5) of Caenorhabditis elegans.